The primary structure comprises 462 residues: tRNA modification GTPase MnmE (462 aa).

(6S)-5-formyl-5,6,7,8-tetrahydrofolate-binding residues include Arg23, Glu86, and Lys125. The 164-residue stretch at 221 to 384 (GIPVAIVGEP…LKNQLLSFVN (164 aa)) folds into the TrmE-type G domain. Residue Asn231 coordinates K(+). GTP-binding positions include 231-236 (NVGKST), 250-256 (SEIAGTT), and 275-278 (DTAG). Position 235 (Ser235) interacts with Mg(2+). Residues Ser250, Ile252, and Thr255 each contribute to the K(+) site. Thr256 contacts Mg(2+). Residue Lys462 participates in (6S)-5-formyl-5,6,7,8-tetrahydrofolate binding.

It belongs to the TRAFAC class TrmE-Era-EngA-EngB-Septin-like GTPase superfamily. TrmE GTPase family. Homodimer. Heterotetramer of two MnmE and two MnmG subunits. K(+) serves as cofactor.

It localises to the cytoplasm. Exhibits a very high intrinsic GTPase hydrolysis rate. Involved in the addition of a carboxymethylaminomethyl (cmnm) group at the wobble position (U34) of certain tRNAs, forming tRNA-cmnm(5)s(2)U34. The sequence is that of tRNA modification GTPase MnmE from Flavobacterium psychrophilum (strain ATCC 49511 / DSM 21280 / CIP 103535 / JIP02/86).